Reading from the N-terminus, the 555-residue chain is Phosphomethylpyrimidine synthase (555 aa).

Residues Asn191, Met220, Tyr249, His285, 305–307, 346–349, and Glu385 each bind substrate; these read SRG and DGLR. His389 contacts Zn(2+). Tyr412 serves as a coordination point for substrate. Residue His453 coordinates Zn(2+). [4Fe-4S] cluster is bound by residues Cys533, Cys536, and Cys541.

It belongs to the ThiC family. Homodimer. Requires [4Fe-4S] cluster as cofactor.

The catalysed reaction is 5-amino-1-(5-phospho-beta-D-ribosyl)imidazole + S-adenosyl-L-methionine = 4-amino-2-methyl-5-(phosphooxymethyl)pyrimidine + CO + 5'-deoxyadenosine + formate + L-methionine + 3 H(+). It functions in the pathway cofactor biosynthesis; thiamine diphosphate biosynthesis. Its function is as follows. Catalyzes the synthesis of the hydroxymethylpyrimidine phosphate (HMP-P) moiety of thiamine from aminoimidazole ribotide (AIR) in a radical S-adenosyl-L-methionine (SAM)-dependent reaction. The polypeptide is Phosphomethylpyrimidine synthase (Ehrlichia ruminantium (strain Gardel)).